The chain runs to 425 residues: SWI5-dependent HO expression protein 3 (425 aa).

The segment at 24–45 is disordered; the sequence is NLESSPTKDRNTSSQNASSSRV. Residues 35 to 45 are compositionally biased toward polar residues; it reads TSSQNASSSRV. Residues 68 to 197 are a coiled coil; the sequence is QNLLSKLELA…LELSNQNLNY (130 aa). A disordered region spans residues 322 to 425; that stretch reads RKTPNTNDSS…NSMVVHGAQS (104 aa). The segment covering 326–338 has biased composition (low complexity); sequence NTNDSSSNGNSSN. Phosphoserine is present on S343. Polar residues-rich tracts occupy residues 345–358 and 382–397; these read YTAS…SIPK and KTNV…SPTI. The residue at position 394 (S394) is a Phosphoserine.

Belongs to the SHE3 family. In terms of assembly, interacts with SHE2 and MYO4.

The protein localises to the endoplasmic reticulum membrane. RNA-binding protein that binds specific mRNAs including the ASH1 mRNA, coding for a repressor of the HO endonuclease. Part of the mRNA localization machinery that restricts accumulation of certain proteins to the bud and in the daughter cell. Required for the delivery of cortical endoplasmic reticulum into the emerging bud. This chain is SWI5-dependent HO expression protein 3 (SHE3), found in Saccharomyces cerevisiae (strain ATCC 204508 / S288c) (Baker's yeast).